Reading from the N-terminus, the 100-residue chain is Large ribosomal subunit protein eL14 (100 aa).

The protein belongs to the eukaryotic ribosomal protein eL14 family.

This Aeropyrum pernix (strain ATCC 700893 / DSM 11879 / JCM 9820 / NBRC 100138 / K1) protein is Large ribosomal subunit protein eL14.